Consider the following 476-residue polypeptide: Variant surface glycoprotein MITAT 1.2 (476 aa).

A signal peptide spans 1–26 (MPSNQEARLFLAVLVLAQVLPILVDS). Disulfide bonds link Cys-41–Cys-171 and Cys-149–Cys-213. The N-linked (GlcNAc...) asparagine glycan is linked to Asn-289. Disordered regions lie at residues 389 to 418 (QKHK…CKSP) and 435 to 459 (EEAK…TGSS). Cystine bridges form between Cys-407-Cys-419 and Cys-415-Cys-430. A compositionally biased stretch (basic and acidic residues) spans 435-449 (EEAKKVADETAKDGK). Residues 450–459 (TGNTNTTGSS) are compositionally biased toward low complexity. Residue Asn-454 is glycosylated (N-linked (GlcNAc...) asparagine). Ser-459 is lipidated: GPI-anchor amidated serine. The propeptide at 460-476 (NSFVISKTPLWLAVLLF) is removed in mature form.

As to quaternary structure, homodimer.

The protein localises to the cell membrane. Functionally, VSG forms a coat on the surface of the parasite. The trypanosome evades the immune response of the host by expressing a series of antigenically distinct VSGs from an estimated 1000 VSG genes. This is Variant surface glycoprotein MITAT 1.2 from Trypanosoma brucei brucei.